We begin with the raw amino-acid sequence, 316 residues long: tRNA dimethylallyltransferase (316 aa).

G15–S22 contributes to the ATP binding site. Position 17–22 (T17–S22) interacts with substrate. Residues D40–Q43 form an interaction with substrate tRNA region.

This sequence belongs to the IPP transferase family. In terms of assembly, monomer. Mg(2+) is required as a cofactor.

It carries out the reaction adenosine(37) in tRNA + dimethylallyl diphosphate = N(6)-dimethylallyladenosine(37) in tRNA + diphosphate. Its function is as follows. Catalyzes the transfer of a dimethylallyl group onto the adenine at position 37 in tRNAs that read codons beginning with uridine, leading to the formation of N6-(dimethylallyl)adenosine (i(6)A). This Chlorobium limicola (strain DSM 245 / NBRC 103803 / 6330) protein is tRNA dimethylallyltransferase.